Consider the following 251-residue polypeptide: Capsid protein (251 aa).

The Bipartite nuclear localization signal motif lies at 3–20 (KRDLPWRSMAGTSKVSRN). A Nuclear localization signal motif is present at residues 35-49 (KAAEWVNRPMYRKPR). The segment at 63–80 (CEGPCKVQSFEQRHDISH) is a zinc-finger region. Residues 96 to 117 (ITHRVGKRFCVKSVYILGKIWM) carry the Nuclear export signal motif. Residues 195 to 242 (KRFWKVNNHVVYNHQEAGKYENHTENALLLYMACTHASNPVYATLKIR) carry the Bipartite nuclear localization signal motif.

Belongs to the geminiviridae capsid protein family. Homomultimer. Binds to single-stranded and double-stranded viral DNA. Interacts (via nuclear localization signals) with host importin alpha-1a.

The protein resides in the virion. The protein localises to the host nucleus. In terms of biological role, encapsidates the viral DNA into characteristic twinned ('geminate') particles. Binds the genomic viral ssDNA and shuttles it into and out of the cell nucleus. The CP of bipartite geminiviruses is not required for cell-to-cell or systemic movement. The chain is Capsid protein from Tomato mottle virus (isolate Florida) (ToMoV).